Consider the following 526-residue polypeptide: Seipin-2 (526 aa).

The tract at residues 33-77 (PIRSNSHQPSSLLRRRKSAHRRDLISSDIETEPSSSSDGFDVGEK) is disordered. Over residues 58 to 70 (SSDIETEPSSSSD) the composition is skewed to low complexity. The next 4 helical transmembrane spans lie at 195 to 215 (SLLT…FDPF), 224 to 243 (FLMA…MNPF), 258 to 278 (FGWG…LLVS), and 483 to 503 (LFVW…LVCC).

Belongs to the seipin family. As to expression, expressed in seeds, seedlings, leaves, stems and roots. Not detected in flowers.

Its subcellular location is the endoplasmic reticulum membrane. Functionally, involved in lipid metabolism and lipid droplet (LD) morphology, number, and size. Supports the formation of small-sized LDs and modulates triacylglycerol accumulation. Induces probably a reorganization of the endoplasmic reticulum into LD-forming domains. The protein is Seipin-2 of Arabidopsis thaliana (Mouse-ear cress).